Reading from the N-terminus, the 159-residue chain is MAPVTLSTVDDDLKEVIQHLFEIQSAVHGYLGPETQTELVRKIKNLTLALSTLSTHTKPQPPSQDDEQKGSANDPLLRDIQLPPEIIDYVDAARNPDIYTREFVELVQRGNQDLKGKKEAFASFRDVLAREMRSAMPECRGEVERVLAATGGARADTEQ.

The tract at residues 54-77 (STHTKPQPPSQDDEQKGSANDPLL) is disordered.

It belongs to the Mediator complex subunit 10 family. As to quaternary structure, component of the Mediator complex.

The protein localises to the nucleus. In terms of biological role, component of the Mediator complex, a coactivator involved in the regulated transcription of nearly all RNA polymerase II-dependent genes. Mediator functions as a bridge to convey information from gene-specific regulatory proteins to the basal RNA polymerase II transcription machinery. Mediator is recruited to promoters by direct interactions with regulatory proteins and serves as a scaffold for the assembly of a functional preinitiation complex with RNA polymerase II and the general transcription factors. The polypeptide is Mediator of RNA polymerase II transcription subunit 10 (nut2) (Aspergillus fumigatus (strain ATCC MYA-4609 / CBS 101355 / FGSC A1100 / Af293) (Neosartorya fumigata)).